The sequence spans 306 residues: Type 2A encapsulin shell protein SrpI (306 aa).

This sequence belongs to the encapsulin family. Family 2A subfamily. As to quaternary structure, the 24.5 nm encapsulin nanocompartment is formed by 60 subunits; monomers form pentamers which assemble to form shells. There are 12 positively charged pores where the pentamers meet with a minimal pore diameter of 3.7 Angstroms as well 3-fold axis channels and dimer channels.

It localises to the encapsulin nanocompartment. In terms of biological role, shell component of a type 2A encapsulin nanocompartment. Expression in E.coli generates nanocompartments with an average diameter of 25 nm. They can be disassembled by treatment with 6M guanidine hydrochloride and reassembled with cargo. The nanocompartment is probably involved in sulfur metabolism. Probably allows passage of cysteine into its interior; during growth in light the physiological pH is 8-8.4, about 30-54% of free cysteine (charge -1) would be able to pass through the shell. In Synechococcus elongatus (strain ATCC 33912 / PCC 7942 / FACHB-805) (Anacystis nidulans R2), this protein is Type 2A encapsulin shell protein SrpI.